Here is a 367-residue protein sequence, read N- to C-terminus: UDP-N-acetylglucosamine--N-acetylmuramyl-(pentapeptide) pyrophosphoryl-undecaprenol N-acetylglucosamine transferase (367 aa).

UDP-N-acetyl-alpha-D-glucosamine contacts are provided by residues 13–15 (TGG), Asn127, Arg168, Ser200, Ile251, and Gln296.

It belongs to the glycosyltransferase 28 family. MurG subfamily.

The protein localises to the cell inner membrane. The catalysed reaction is di-trans,octa-cis-undecaprenyl diphospho-N-acetyl-alpha-D-muramoyl-L-alanyl-D-glutamyl-meso-2,6-diaminopimeloyl-D-alanyl-D-alanine + UDP-N-acetyl-alpha-D-glucosamine = di-trans,octa-cis-undecaprenyl diphospho-[N-acetyl-alpha-D-glucosaminyl-(1-&gt;4)]-N-acetyl-alpha-D-muramoyl-L-alanyl-D-glutamyl-meso-2,6-diaminopimeloyl-D-alanyl-D-alanine + UDP + H(+). It participates in cell wall biogenesis; peptidoglycan biosynthesis. Its function is as follows. Cell wall formation. Catalyzes the transfer of a GlcNAc subunit on undecaprenyl-pyrophosphoryl-MurNAc-pentapeptide (lipid intermediate I) to form undecaprenyl-pyrophosphoryl-MurNAc-(pentapeptide)GlcNAc (lipid intermediate II). The protein is UDP-N-acetylglucosamine--N-acetylmuramyl-(pentapeptide) pyrophosphoryl-undecaprenol N-acetylglucosamine transferase of Flavobacterium psychrophilum (strain ATCC 49511 / DSM 21280 / CIP 103535 / JIP02/86).